Consider the following 150-residue polypeptide: Large ribosomal subunit protein bL9 (150 aa).

This sequence belongs to the bacterial ribosomal protein bL9 family.

Functionally, binds to the 23S rRNA. The chain is Large ribosomal subunit protein bL9 from Streptococcus pyogenes serotype M2 (strain MGAS10270).